The following is a 206-amino-acid chain: Ras-related protein Rab7 (206 aa).

GTP-binding positions include 15-22 (GDTGVGKT), 63-67 (DTAGQ), and 125-128 (NKID). Residues Cys-204 and Cys-206 are each lipidated (S-geranylgeranyl cysteine). Cys-206 carries the post-translational modification Cysteine methyl ester.

Belongs to the small GTPase superfamily. Rab family.

Its subcellular location is the cell membrane. Functionally, protein transport. Probably involved in vesicular traffic. This is Ras-related protein Rab7 from Vigna aconitifolia (Moth bean).